The primary structure comprises 715 residues: MARELYHEEFARAGKQAGLQVWRIEKLELVPVPQSAHGDFYVGDAYLVLHTAKTSRGFTYHLHFWLGKECSQDESTAAAIFTVQMDDYLGGKPVQNRELQGYESNDFVSYFKGGLKYKAGGVASGLNHVLTNDLTAKRLLHVKGRRVVRATEVPLSWDSFNKGDCFIIDLGTEIYQWCGSSCNKYERLKANQVATGIRYNERKGRSELIVVEEGSEPSELIKVLGEKPELPDGGDDDDIIADISNRKMAKLYMVSDASGSMRVTVVAEENPFSMAMLLSEECFILDHGAAKQIFVWKGKDANPQERKAAMKTAEEFLQQMNYSKNTQIQVLPEGGETPIFKQFFKDWRDKDQSDGFGKVYVTEKVAQIKQIPFDASKLHSSPQMAAQHNMVDDGSGKVEIWRVENNGRIQVDQNSYGEFYGGDCYIILYTYPRGQIIYTWQGANATRDELTTSAFLTVQLDRSLGGQAVQIRVSQGKEPVHLLSLFKDKPLIIYKNGTSKKGGQAPAPPTRLFQVRRNLASITRIVEVDVDANSLNSNDVFVLKLPQNSGYIWVGKGASQEEEKGAEYVASVLKCKTLRIQEGEEPEEFWNSLGGKKDYQTSPLLETQAEDHPPRLYGCSNKTGRFVIEEIPGEFTQDDLAEDDVMLLDAWEQIFIWIGKDANEVEKKESLKSAKMYLETDPSGRDKRTPIVIIKQGHEPPTFTGWFLGWDSSKW.

An actin-severing region spans residues 1-363 (MARELYHEEF…DGFGKVYVTE (363 aa)). Residues 27 to 76 (LELVPVPQSAHGDFYVGDAYLVLHTAKTSRGFTYHLHFWLGKECSQDEST) form a Gelsolin-like 1 repeat. Tyrosine 102 carries the post-translational modification Phosphotyrosine. Residues 112 to 119 (KGGLKYKA) and 138 to 146 (RLLHVKGRR) contribute to the a 1,2-diacyl-sn-glycero-3-phospho-(1D-myo-inositol-4,5-bisphosphate) site. 4 Gelsolin-like repeats span residues 148 to 188 (VRAT…YERL), 265 to 307 (VVAE…QERK), 398 to 451 (VEIW…DELT), and 523 to 564 (TRIV…EEEK). Positions 364-715 (KVAQIKQIPF…WFLGWDSSKW (352 aa)) are ca(2+)-dependent actin binding. Positions 538, 539, and 562 each coordinate Ca(2+). At tyrosine 599 the chain carries Phosphotyrosine. The Gelsolin-like 6 repeat unit spans residues 626 to 668 (FVIEEIPGEFTQDDLAEDDVMLLDAWEQIFIWIGKDANEVEKK). Residues aspartate 643, aspartate 644, and glutamate 666 each coordinate Ca(2+).

This sequence belongs to the villin/gelsolin family. In terms of tissue distribution, expressed in megakaryocytes.

It is found in the cytoplasm. Its subcellular location is the cytoskeleton. The protein resides in the cell projection. The protein localises to the podosome. Functionally, ca(2+)-dependent actin filament-severing protein that has a regulatory function in exocytosis by affecting the organization of the microfilament network underneath the plasma membrane. Severing activity is inhibited by phosphatidylinositol 4,5-bis-phosphate (PIP2). In vitro, also has barbed end capping and nucleating activities in the presence of Ca(2+). Required for megakaryocyte differentiation, maturation, polyploidization and apoptosis with the release of platelet-like particles. Plays a role in osteoclastogenesis (OCG) and actin cytoskeletal organization in osteoclasts. Regulates chondrocyte proliferation and differentiation. Inhibits cell proliferation and tumorigenesis. Signaling is mediated by MAPK, p38 and JNK pathways. The sequence is that of Scinderin from Homo sapiens (Human).